Consider the following 268-residue polypeptide: Interleukin-1 alpha (268 aa).

A propeptide spanning residues 1-112 (MAKVPDLFED…DTEEEIIKPR (112 aa)) is cleaved from the precursor. Lys82 is subject to N6-acetyllysine. A nuclear localization signal (NLS) region spans residues 82-86 (KKRRL). The residue at position 87 (Ser87) is a Phosphoserine. 2 N-linked (GlcNAc...) asparagine glycosylation sites follow: Asn102 and Asn141.

This sequence belongs to the IL-1 family. As to quaternary structure, monomer. Interacts with TMED10; the interaction mediates the translocation from the cytoplasm into the ERGIC (endoplasmic reticulum-Golgi intermediate compartment) and thereby secretion. Interacts with IL1R1. Interacts with S100A13; this interaction is the first step in the export of IL1A, followed by direct translocation of this complex across the plasma membrane. Acetylated within its nuclear localization sequence, which impacts subcellular localization. Post-translationally, proteolytic processed by CAPN1 in a calcium-dependent manner. Cleavage from 31 kDa precursor to 18 kDa biologically active molecules. In terms of processing, phosphorylated. Phosphorylation greatly enhances susceptibility to digestion and promotes the conversion of pre-IL1A alpha to the biologically active IL1A.

The protein localises to the nucleus. It localises to the cytoplasm. Its subcellular location is the secreted. Cytokine constitutively present intracellularly in nearly all resting non-hematopoietic cells that plays an important role in inflammation and bridges the innate and adaptive immune systems. After binding to its receptor IL1R1 together with its accessory protein IL1RAP, forms the high affinity interleukin-1 receptor complex. Signaling involves the recruitment of adapter molecules such as MYD88, IRAK1 or IRAK4. In turn, mediates the activation of NF-kappa-B and the three MAPK pathways p38, p42/p44 and JNK pathways. Within the cell, acts as an alarmin and cell death results in its liberation in the extracellular space after disruption of the cell membrane to induce inflammation and alert the host to injury or damage. In addition to its role as a danger signal, which occurs when the cytokine is passively released by cell necrosis, directly senses DNA damage and acts as signal for genotoxic stress without loss of cell integrity. The sequence is that of Interleukin-1 alpha (IL1A) from Lama glama (Llama).